Here is a 340-residue protein sequence, read N- to C-terminus: Anthranilate phosphoribosyltransferase (340 aa).

Residues Gly-81, 84-85 (GD), Thr-89, 91-94 (NIST), 109-117 (KHGNRGATS), and Ser-121 contribute to the 5-phospho-alpha-D-ribose 1-diphosphate site. Anthranilate is bound at residue Gly-81. Ser-93 contributes to the Mg(2+) binding site. Asn-112 provides a ligand contact to anthranilate. Arg-167 is a binding site for anthranilate. Residues Asp-225 and Glu-226 each contribute to the Mg(2+) site.

The protein belongs to the anthranilate phosphoribosyltransferase family. In terms of assembly, homodimer. Mg(2+) serves as cofactor.

The enzyme catalyses N-(5-phospho-beta-D-ribosyl)anthranilate + diphosphate = 5-phospho-alpha-D-ribose 1-diphosphate + anthranilate. It functions in the pathway amino-acid biosynthesis; L-tryptophan biosynthesis; L-tryptophan from chorismate: step 2/5. Its function is as follows. Catalyzes the transfer of the phosphoribosyl group of 5-phosphorylribose-1-pyrophosphate (PRPP) to anthranilate to yield N-(5'-phosphoribosyl)-anthranilate (PRA). The polypeptide is Anthranilate phosphoribosyltransferase (Methanocorpusculum labreanum (strain ATCC 43576 / DSM 4855 / Z)).